The following is a 447-amino-acid chain: Glutamyl-tRNA(Gln) amidotransferase subunit A (447 aa).

Active-site charge relay system residues include lysine 50 and serine 125. The active-site Acyl-ester intermediate is serine 149.

The protein belongs to the amidase family. GatA subfamily. In terms of assembly, heterotrimer of A, B and C subunits.

It catalyses the reaction L-glutamyl-tRNA(Gln) + L-glutamine + ATP + H2O = L-glutaminyl-tRNA(Gln) + L-glutamate + ADP + phosphate + H(+). Its function is as follows. Allows the formation of correctly charged Gln-tRNA(Gln) through the transamidation of misacylated Glu-tRNA(Gln) in organisms which lack glutaminyl-tRNA synthetase. The reaction takes place in the presence of glutamine and ATP through an activated gamma-phospho-Glu-tRNA(Gln). In Sulfurimonas denitrificans (strain ATCC 33889 / DSM 1251) (Thiomicrospira denitrificans (strain ATCC 33889 / DSM 1251)), this protein is Glutamyl-tRNA(Gln) amidotransferase subunit A.